Here is a 428-residue protein sequence, read N- to C-terminus: Dihydroorotase (428 aa).

The Zn(2+) site is built by His-59 and His-61. Substrate contacts are provided by residues 61 to 63 and Asn-93; that span reads HLR. Residues Asp-151, His-178, and His-231 each coordinate Zn(2+). Residue Asn-277 coordinates substrate. Asp-304 contacts Zn(2+). Asp-304 is an active-site residue. Residues His-308 and 322 to 323 contribute to the substrate site; that span reads FG.

This sequence belongs to the metallo-dependent hydrolases superfamily. DHOase family. Class I DHOase subfamily. Zn(2+) is required as a cofactor.

The enzyme catalyses (S)-dihydroorotate + H2O = N-carbamoyl-L-aspartate + H(+). It functions in the pathway pyrimidine metabolism; UMP biosynthesis via de novo pathway; (S)-dihydroorotate from bicarbonate: step 3/3. Its function is as follows. Catalyzes the reversible cyclization of carbamoyl aspartate to dihydroorotate. This chain is Dihydroorotase, found in Bacillus cereus (strain ATCC 10987 / NRS 248).